The primary structure comprises 195 residues: Imidazoleglycerol-phosphate dehydratase (195 aa).

It belongs to the imidazoleglycerol-phosphate dehydratase family.

The protein resides in the cytoplasm. It carries out the reaction D-erythro-1-(imidazol-4-yl)glycerol 3-phosphate = 3-(imidazol-4-yl)-2-oxopropyl phosphate + H2O. Its pathway is amino-acid biosynthesis; L-histidine biosynthesis; L-histidine from 5-phospho-alpha-D-ribose 1-diphosphate: step 6/9. This Burkholderia cenocepacia (strain HI2424) protein is Imidazoleglycerol-phosphate dehydratase.